The following is a 393-amino-acid chain: Probable pectinesterase 8 (393 aa).

The first 19 residues, M1–A19, serve as a signal peptide directing secretion. N100, N113, N140, N156, and N163 each carry an N-linked (GlcNAc...) asparagine glycan. T165 contributes to the substrate binding site. N182 is a glycosylation site (N-linked (GlcNAc...) asparagine). Position 200 (Q200) interacts with substrate. D223 (proton donor) is an active-site residue. Catalysis depends on D244, which acts as the Nucleophile. Residue N295 is glycosylated (N-linked (GlcNAc...) asparagine). R308 is a binding site for substrate. 3 N-linked (GlcNAc...) asparagine glycosylation sites follow: N350, N369, and N378.

This sequence belongs to the pectinesterase family. In terms of tissue distribution, expressed in siliques.

It is found in the secreted. The protein localises to the cell wall. It catalyses the reaction [(1-&gt;4)-alpha-D-galacturonosyl methyl ester](n) + n H2O = [(1-&gt;4)-alpha-D-galacturonosyl](n) + n methanol + n H(+). It participates in glycan metabolism; pectin degradation; 2-dehydro-3-deoxy-D-gluconate from pectin: step 1/5. Acts in the modification of cell walls via demethylesterification of cell wall pectin. In Arabidopsis thaliana (Mouse-ear cress), this protein is Probable pectinesterase 8 (PME8).